The sequence spans 232 residues: MSAPSVITIDGPAGAGKSTLGELLARRLGYLFFDTGVMYRALAWAVLHGAIDPEDGEAVTALARDLDIQVLPPGDAMDGRLYTVLVNGVDVTWELRHPDVERIVSITARHPAVRTVMRERQRAIGSRGRVVMVGRDIGSIVMPDAPLKIYLDASIDERARRRTDEILRRGGDADLQRIRNDMIRRDSLDRYVSAPAADACTIISDGLSPEQVVALVIARIADRCDDSQEARA.

ATP is bound at residue 11–19; that stretch reads GPAGAGKST.

This sequence belongs to the cytidylate kinase family. Type 1 subfamily.

The protein resides in the cytoplasm. It catalyses the reaction CMP + ATP = CDP + ADP. The enzyme catalyses dCMP + ATP = dCDP + ADP. This chain is Cytidylate kinase, found in Roseiflexus castenholzii (strain DSM 13941 / HLO8).